Reading from the N-terminus, the 132-residue chain is Small ribosomal subunit protein uS8 (132 aa).

It belongs to the universal ribosomal protein uS8 family. Part of the 30S ribosomal subunit. Contacts proteins S5 and S12.

Its function is as follows. One of the primary rRNA binding proteins, it binds directly to 16S rRNA central domain where it helps coordinate assembly of the platform of the 30S subunit. The chain is Small ribosomal subunit protein uS8 from Mycoplasmopsis pulmonis (strain UAB CTIP) (Mycoplasma pulmonis).